A 635-amino-acid chain; its full sequence is Threonine--tRNA ligase (635 aa).

The TGS domain occupies 1 to 61; the sequence is MVSIRLPDGS…DRDASLAIVT (61 aa). The catalytic stretch occupies residues 242–533; it reads DHRKLGKQLD…LIEHHAGAMP (292 aa). Zn(2+) contacts are provided by C333, H384, and H510.

This sequence belongs to the class-II aminoacyl-tRNA synthetase family. As to quaternary structure, homodimer. Requires Zn(2+) as cofactor.

The protein localises to the cytoplasm. The catalysed reaction is tRNA(Thr) + L-threonine + ATP = L-threonyl-tRNA(Thr) + AMP + diphosphate + H(+). In terms of biological role, catalyzes the attachment of threonine to tRNA(Thr) in a two-step reaction: L-threonine is first activated by ATP to form Thr-AMP and then transferred to the acceptor end of tRNA(Thr). Also edits incorrectly charged L-seryl-tRNA(Thr). This is Threonine--tRNA ligase from Burkholderia orbicola (strain MC0-3).